The sequence spans 287 residues: Oxaloacetate decarboxylase (287 aa).

Position 50 (Ser-50) interacts with substrate. Asp-88 is a Mg(2+) binding site. Substrate is bound by residues Arg-159 and His-235.

Belongs to the isocitrate lyase/PEP mutase superfamily. Oxaloacetate decarboxylase family. In terms of assembly, homotetramer; dimer of dimers. It depends on Mg(2+) as a cofactor.

The catalysed reaction is oxaloacetate + H(+) = pyruvate + CO2. In terms of biological role, catalyzes the decarboxylation of oxaloacetate into pyruvate. Seems to play a role in maintaining cellular concentrations of bicarbonate and pyruvate. The sequence is that of Oxaloacetate decarboxylase from Pseudomonas paraeruginosa (strain DSM 24068 / PA7) (Pseudomonas aeruginosa (strain PA7)).